A 243-amino-acid chain; its full sequence is GTP cyclohydrolase 1 type 2 (243 aa).

Positions 63, 64, 102, 209, and 213 each coordinate a divalent metal cation.

The protein belongs to the GTP cyclohydrolase I type 2/NIF3 family. Homohexamer.

It catalyses the reaction GTP + H2O = 7,8-dihydroneopterin 3'-triphosphate + formate + H(+). Its pathway is cofactor biosynthesis; 7,8-dihydroneopterin triphosphate biosynthesis; 7,8-dihydroneopterin triphosphate from GTP: step 1/1. Functionally, converts GTP to dihydroneopterin triphosphate. The protein is GTP cyclohydrolase 1 type 2 of Helicobacter pylori (strain J99 / ATCC 700824) (Campylobacter pylori J99).